Reading from the N-terminus, the 257-residue chain is Pimeloyl-[acyl-carrier protein] methyl ester esterase (257 aa).

Residues 16–240 (LVLIHGWGMN…EQASHAPFIS (225 aa)) form the AB hydrolase-1 domain. Residues Trp22, 82 to 83 (SL), and 143 to 147 (FMALQ) each bind substrate. Catalysis depends on Ser82, which acts as the Nucleophile. Active-site residues include Asp207 and His235. Position 235 (His235) interacts with substrate.

It belongs to the AB hydrolase superfamily. Carboxylesterase BioH family. As to quaternary structure, monomer.

It localises to the cytoplasm. It catalyses the reaction 6-carboxyhexanoyl-[ACP] methyl ester + H2O = 6-carboxyhexanoyl-[ACP] + methanol + H(+). It functions in the pathway cofactor biosynthesis; biotin biosynthesis. The physiological role of BioH is to remove the methyl group introduced by BioC when the pimeloyl moiety is complete. It allows to synthesize pimeloyl-ACP via the fatty acid synthetic pathway through the hydrolysis of the ester bonds of pimeloyl-ACP esters. The sequence is that of Pimeloyl-[acyl-carrier protein] methyl ester esterase from Aliivibrio fischeri (strain MJ11) (Vibrio fischeri).